The following is a 403-amino-acid chain: Imidazolonepropionase (403 aa).

Fe(3+) is bound by residues His74 and His76. Positions 74 and 76 each coordinate Zn(2+). The 4-imidazolone-5-propanoate site is built by Arg83, Tyr146, and His179. Residue Tyr146 participates in N-formimidoyl-L-glutamate binding. Residue His242 coordinates Fe(3+). A Zn(2+)-binding site is contributed by His242. Gln245 lines the 4-imidazolone-5-propanoate pocket. Residue Asp317 participates in Fe(3+) binding. Asp317 contacts Zn(2+). Asn319 and Gly321 together coordinate N-formimidoyl-L-glutamate. Residue Thr322 coordinates 4-imidazolone-5-propanoate.

This sequence belongs to the metallo-dependent hydrolases superfamily. HutI family. Zn(2+) serves as cofactor. Fe(3+) is required as a cofactor.

The protein localises to the cytoplasm. It carries out the reaction 4-imidazolone-5-propanoate + H2O = N-formimidoyl-L-glutamate. The protein operates within amino-acid degradation; L-histidine degradation into L-glutamate; N-formimidoyl-L-glutamate from L-histidine: step 3/3. Its function is as follows. Catalyzes the hydrolytic cleavage of the carbon-nitrogen bond in imidazolone-5-propanoate to yield N-formimidoyl-L-glutamate. It is the third step in the universal histidine degradation pathway. The sequence is that of Imidazolonepropionase from Sphingopyxis alaskensis (strain DSM 13593 / LMG 18877 / RB2256) (Sphingomonas alaskensis).